The primary structure comprises 31 residues: Photosystem II reaction center protein T (31 aa).

The chain crosses the membrane as a helical span at residues 3-23 (SFAYILILGLAIATLFFAIAF).

Belongs to the PsbT family. PSII is composed of 1 copy each of membrane proteins PsbA, PsbB, PsbC, PsbD, PsbE, PsbF, PsbH, PsbI, PsbJ, PsbK, PsbL, PsbM, PsbT, PsbX, PsbY, PsbZ, Psb30/Ycf12, peripheral proteins PsbO, CyanoQ (PsbQ), PsbU, PsbV and a large number of cofactors. It forms dimeric complexes.

It is found in the cellular thylakoid membrane. Functionally, found at the monomer-monomer interface of the photosystem II (PS II) dimer, plays a role in assembly and dimerization of PSII. PSII is a light-driven water plastoquinone oxidoreductase, using light energy to abstract electrons from H(2)O, generating a proton gradient subsequently used for ATP formation. This chain is Photosystem II reaction center protein T, found in Synechococcus sp. (strain CC9311).